The chain runs to 319 residues: Ankyrin repeat domain-containing protein 1 (319 aa).

Residues 63 to 89 (EKQLEAELKKKKLEQRSKLENLEDLEI) are a coiled coil. ANK repeat units lie at residues 152–181 (YKRTALHRACLEGHLAIVEKLMEAGAQIEF), 185–214 (LESTAIHWACRGGNLEVLKLLLNKGAKISA), 218–247 (LLSTALHVAVRTGHYECAEHLIACEADLNA), 251–280 (EGDTPLHDAVRLNRYKMIRLLIMYGADLTI), and 284–315 (AGKTPMDLVLNWQNGTKAIFDSLKENSYKTSR).

Interacts with TTN/titin and YBX1.

It localises to the nucleus. Its function is as follows. May play an important role in endothelial cell activation. May act as a nuclear transcription factor that negatively regulates the expression of cardiac genes. The polypeptide is Ankyrin repeat domain-containing protein 1 (ANKRD1) (Oryctolagus cuniculus (Rabbit)).